A 501-amino-acid polypeptide reads, in one-letter code: Solute carrier family 2, facilitated glucose transporter member 5 (501 aa).

An N-acetylmethionine modification is found at methionine 1. The Cytoplasmic segment spans residues 1-18; the sequence is MEPQDPVKREGRLTPVIV. A helical transmembrane segment spans residues 19–39; the sequence is LATLIAAFGSSFQYGYNVATI. D-fructose is bound at residue tyrosine 32. At 40–68 the chain is on the extracellular side; sequence NSPSEFMKDFYNYTYYDRVGEYMNEFYLT. A glycan (N-linked (GlcNAc...) asparagine) is linked at asparagine 51. The helical transmembrane segment at 69–91 threads the bilayer; it reads LLWSVTVSMFPFGGFLGSLMVGP. The Cytoplasmic portion of the chain corresponds to 92–98; that stretch reads LVNNLGR. The helical transmembrane segment at 99-119 threads the bilayer; the sequence is KGTLLFNNIFSIVPALLMGFS. Residues 120-126 are Extracellular-facing; that stretch reads DLAKSFE. Residues 127–149 traverse the membrane as a helical segment; that stretch reads MIIVARVLVGICAGLSSNVVPMY. Topologically, residues 150-161 are cytoplasmic; that stretch reads LGELAPKNWRGA. Residues 162 to 182 traverse the membrane as a helical segment; it reads LGVVPQLFITIGILVAQIFGL. Position 167 (glutamine 167) interacts with D-fructose. At 183–192 the chain is on the extracellular side; the sequence is RSLLANEEGW. A helical membrane pass occupies residues 193–213; that stretch reads PILLGLTGIPAVLQLLFLPFF. Residues 214–277 lie on the Cytoplasmic side of the membrane; the sequence is PESPRYLLIQ…LFKMRSLRWQ (64 aa). The helical transmembrane segment at 278–298 threads the bilayer; the sequence is VISIIVLMAGQQLSGVNAIYY. D-fructose is bound by residues glutamine 288 and 296-298; that span reads IYY. Residues 299 to 313 are Extracellular-facing; the sequence is YADQIYLSAGVKEDD. The helical transmembrane segment at 314–334 threads the bilayer; the sequence is VQYVTAGTGAVNVLITVCAIF. At 335 to 342 the chain is on the cytoplasmic side; it reads VVELMGRR. Residues 343–363 traverse the membrane as a helical segment; that stretch reads FLLLLGFSVCFTACCVLTGAL. Residues 364-371 are Extracellular-facing; it reads AMQDVISW. The chain crosses the membrane as a helical span at residues 372-394; it reads MPYVSIACVISYVIGHALGPSPI. Position 387 (histidine 387) interacts with D-fructose. Topologically, residues 395–412 are cytoplasmic; it reads PALLVTEIFLQSSRPAAY. A helical transmembrane segment spans residues 413–433; sequence MVAGTVHWLSNFTVGLVFPFI. 419–420 contributes to the D-fructose binding site; that stretch reads HW. Residues 434-439 lie on the Extracellular side of the membrane; it reads QVGLGA. A helical transmembrane segment spans residues 440–460; sequence YSFVIFAVICFLTTVYIFLII. Residues 461-501 lie on the Cytoplasmic side of the membrane; the sequence is PETKSKTFIEINQIFIKMNKVPGVHPEKEELKEFPPSTARQ.

This sequence belongs to the major facilitator superfamily. Sugar transporter (TC 2.A.1.1) family. Glucose transporter subfamily.

The protein localises to the apical cell membrane. It is found in the cell membrane. Its subcellular location is the sarcolemma. The enzyme catalyses D-fructose(out) = D-fructose(in). Its function is as follows. Functions as a fructose transporter that has only low activity with other monosaccharides. Can mediate the uptake of deoxyglucose, but with low efficiency. Essential for fructose uptake in the small intestine. Plays a role in the regulation of salt uptake and blood pressure in response to dietary fructose. Required for the development of high blood pressure in response to high dietary fructose intake. The polypeptide is Solute carrier family 2, facilitated glucose transporter member 5 (Ovis aries (Sheep)).